Here is a 427-residue protein sequence, read N- to C-terminus: 3-deoxy-D-manno-octulosonic acid transferase (427 aa).

A helical; Signal-anchor transmembrane segment spans residues F4–L24. E62 (proton acceptor) is an active-site residue. CMP is bound by residues P270–R271, M311–E313, and N337–E340.

It belongs to the glycosyltransferase group 1 family. Glycosyltransferase 30 subfamily.

It is found in the cell inner membrane. It catalyses the reaction lipid IVA (E. coli) + CMP-3-deoxy-beta-D-manno-octulosonate = alpha-Kdo-(2-&gt;6)-lipid IVA (E. coli) + CMP + H(+). It participates in bacterial outer membrane biogenesis; LPS core biosynthesis. Involved in lipopolysaccharide (LPS) biosynthesis. Catalyzes the transfer of a single 3-deoxy-D-manno-octulosonate (Kdo) residue from CMP-Kdo to lipid IV(A), the tetraacyldisaccharide-1,4'-bisphosphate precursor of lipid A. Is strictly monofunctional, i.e. is capable of adding only a single Kdo residue to the acceptor lipid. The polypeptide is 3-deoxy-D-manno-octulosonic acid transferase (waaA) (Haemophilus influenzae (strain ATCC 51907 / DSM 11121 / KW20 / Rd)).